A 228-amino-acid chain; its full sequence is Response regulator SaeR (228 aa).

The Response regulatory domain maps to 3–116 (HLLIVDDEQD…ELVLRINNLL (114 aa)). Asp51 carries the 4-aspartylphosphate modification. Positions 127–226 (VEQLSFDELT…VWGLGYKFER (100 aa)) form a DNA-binding region, ompR/PhoB-type.

In terms of processing, phosphorylated by SaeS.

It localises to the cytoplasm. Member of the two-component regulatory system SaeR/SaeS involved in the regulation of staphylococcal virulence factors in a strain-dependent fashion. Probably functions as a transcriptional regulator via a specific DNA-binding domain, recognizing motifs near the promoter sequences of target genes. The polypeptide is Response regulator SaeR (saeR) (Staphylococcus aureus (strain USA300)).